A 35-amino-acid polypeptide reads, in one-letter code: Cupiennin-1b (35 aa).

A Glutamic acid 1-amide modification is found at glutamate 35.

It belongs to the cationic peptide 04 (cupiennin) family. 01 subfamily. As to expression, expressed by the venom gland.

The protein resides in the secreted. In terms of biological role, has antimicrobial activity against E.coli, E.faecalis, P.aeruginosa, and S.aureus. Has insecticidal and hemolytic activities. Probably acts by disturbing membrane function with its amphipathic structure. In Cupiennius salei (American wandering spider), this protein is Cupiennin-1b.